The following is a 517-amino-acid chain: ATP synthase subunit alpha (517 aa).

174–181 lines the ATP pocket; it reads GDRQTGKT.

The protein belongs to the ATPase alpha/beta chains family. In terms of assembly, F-type ATPases have 2 components, CF(1) - the catalytic core - and CF(0) - the membrane proton channel. CF(1) has five subunits: alpha(3), beta(3), gamma(1), delta(1), epsilon(1). CF(0) has four main subunits: a(1), b(1), b'(1) and c(9-12).

It localises to the cell inner membrane. The catalysed reaction is ATP + H2O + 4 H(+)(in) = ADP + phosphate + 5 H(+)(out). Functionally, produces ATP from ADP in the presence of a proton gradient across the membrane. The alpha chain is a regulatory subunit. This is ATP synthase subunit alpha from Methylibium petroleiphilum (strain ATCC BAA-1232 / LMG 22953 / PM1).